Here is a 551-residue protein sequence, read N- to C-terminus: MAAKDVKFGSEARAKMLRGVNILADAVKVTLGPKGRNVVLDKSFGAPSITKDGVSVAREIELEDKFENMGAQMVKEVASKANDVAGDGTTTATLLAQSIVNEGLKAVAAGMNPMDLKRGIDQAVIKAVKELKKLSVPCSDSKAITQVGTISANADETVGSLISEAMDKVGNDGVITVEEGTGLEDELDVVKGMQFDRGYLSPYFINKPETGNIELENPYILMVDKKISNIRDILSLLESVAKSGKPLLIIAEDLEGEALATLVVNSMRGIVKIAAVKAPGFGDRRKAMLQDISILTFLYNSDVISEELAMDLDKTTLEDLGQAKGVVITKDHTIIVGSGKKEIFKQILIRQQLIESTSDYDKEKLNERLAKLSGGVAVLKVGAATEVEMKEKKARVEDALHATRAAVEEGVVAGGGVALVRVAEKISRLKGQNEDQNVGIRVAVRSMEAPLRQIVANSGEEPSVVTNNVKDGVGNYGYNAATDQYGDMIKFGILDPTKVTRSALQYAASVAGLMITTECMVTDSPKEDKSSDMPSPSAGGMGGMGGMGGMM.

ATP-binding positions include 30-33 (TLGP), Lys51, 87-91 (DGTTT), Gly415, 479-481 (NAA), and Asp495. The interval 523 to 551 (DSPKEDKSSDMPSPSAGGMGGMGGMGGMM) is disordered. The span at 539–551 (GGMGGMGGMGGMM) shows a compositional bias: gly residues.

This sequence belongs to the chaperonin (HSP60) family. In terms of assembly, forms a cylinder of 14 subunits composed of two heptameric rings stacked back-to-back. Interacts with the co-chaperonin GroES.

The protein localises to the cytoplasm. The enzyme catalyses ATP + H2O + a folded polypeptide = ADP + phosphate + an unfolded polypeptide.. Its function is as follows. Together with its co-chaperonin GroES, plays an essential role in assisting protein folding. The GroEL-GroES system forms a nano-cage that allows encapsulation of the non-native substrate proteins and provides a physical environment optimized to promote and accelerate protein folding. The protein is Chaperonin GroEL of Buchnera aphidicola subsp. Chaetophorus leucomelas.